The following is a 335-amino-acid chain: Acyl-CoA Delta(11) desaturase (335 aa).

Transmembrane regions (helical) follow at residues 39-59 (LLTFGYWHIAGLYGLYLCFTS), 64-84 (TIILALILNEMAILGITAGAH), and 98-118 (LQIILIIFNSLSFQNSAIHWI). The Histidine box-1 motif lies at 84–89 (HRLWAH). A Histidine box-2 motif is present at residues 121–125 (HRMHH). Transmembrane regions (helical) follow at residues 182–202 (AIPFIGMICFVLPTIIPMYFW) and 213–235 (TMLRYVFSLNSIFLVNSAAHLYG). The Histidine box-3 motif lies at 261–265 (HNYHH). Positions 312 to 335 (MKRTGDGTDVSGQKYSCESSEVLQ) are disordered. The span at 321–335 (VSGQKYSCESSEVLQ) shows a compositional bias: polar residues.

Belongs to the fatty acid desaturase type 1 family. The cofactor is Fe cation. Detected in pheromone gland.

The protein resides in the membrane. It carries out the reaction an 11,12-saturated fatty acyl-CoA + 2 Fe(II)-[cytochrome b5] + O2 + 2 H(+) = an (11Z)-Delta(11)-fatty acyl-CoA + 2 Fe(III)-[cytochrome b5] + 2 H2O. Its function is as follows. Catalyzes the formation of Delta(11) fatty acyl precursors in the pheromone gland, with a preference for myristic acid. This Choristoneura rosaceana (Oblique banded leafroller) protein is Acyl-CoA Delta(11) desaturase.